The sequence spans 457 residues: B-cell linker protein (457 aa).

Positions 38–306 (KLKVKGPPSV…FPPTQKPVLQ (269 aa)) are disordered. The segment covering 57 to 74 (PADEEEQWSDDFDSDYEN) has biased composition (acidic residues). 5 positions are modified to phosphotyrosine; by SYK: Tyr72, Tyr84, Tyr96, Tyr178, and Tyr189. The segment covering 172–187 (LEDEADYVVPVEDNDE) has biased composition (acidic residues). Composition is skewed to polar residues over residues 206 to 218 (VNRSTKPNSSSKH) and 256 to 270 (PLKTTPVPSLQNASN). Over residues 272–290 (CEEKPVPAERHRGSSHRQD) the composition is skewed to basic and acidic residues. Positions 347–454 (WYAGACDRKS…KDSTRLKYAV (108 aa)) constitute an SH2 domain.

Associates with PLCG1, VAV1 and NCK1 in a B-cell antigen receptor-dependent fashion. Interacts with VAV3, PLCG2 and GRB2. Interacts through its SH2 domain with CD79A. Interacts (via SH2 domain) with SYK; phosphorylated and activated by SYK. Interacts (via SH2 domain) with SCIMP; this interaction is dependent on phosphorylation of SCIMP 'Tyr-120'. Following BCR activation, phosphorylated on tyrosine residues by SYK and LYN. When phosphorylated, serves as a scaffold to assemble downstream targets of antigen activation, including PLCG1, VAV1, GRB2 and NCK1. Phosphorylation of Tyr-84, Tyr-178 and Tyr-189 facilitates PLCG1 binding. Phosphorylation of Tyr-96 facilitates BTK binding. Phosphorylation of Tyr-72 facilitates VAV1 and NCK1 binding. Phosphorylation is required for both Ca(2+) and MAPK signaling pathways.

The protein resides in the cytoplasm. The protein localises to the cell membrane. Functionally, functions as a central linker protein, downstream of the B-cell receptor (BCR), bridging the SYK kinase to a multitude of signaling pathways and regulating biological outcomes of B-cell function and development. Plays a role in the activation of ERK/EPHB2, MAP kinase p38 and JNK. Modulates AP1 activation. Important for the activation of NF-kappa-B and NFAT. Plays an important role in BCR-mediated PLCG1 and PLCG2 activation and Ca(2+) mobilization and is required for trafficking of the BCR to late endosomes. However, does not seem to be required for pre-BCR-mediated activation of MAP kinase and phosphatidyl-inositol 3 (PI3) kinase signaling. May be required for the RAC1-JNK pathway. Plays a critical role in orchestrating the pro-B cell to pre-B cell transition. May play an important role in BCR-induced B-cell apoptosis. The sequence is that of B-cell linker protein (Blnk) from Rattus norvegicus (Rat).